Reading from the N-terminus, the 449-residue chain is Tubulin alpha-2 chain (449 aa).

Residue Gln11 coordinates GTP. Lys40 carries the post-translational modification N6-acetyllysine. Residues Ser140, Gly144, Thr145, Thr179, Asn206, and Asn228 each contribute to the GTP site. The active site involves Glu254.

Belongs to the tubulin family. As to quaternary structure, dimer of alpha and beta chains. A typical microtubule is a hollow water-filled tube with an outer diameter of 25 nm and an inner diameter of 15 nM. Alpha-beta heterodimers associate head-to-tail to form protofilaments running lengthwise along the microtubule wall with the beta-tubulin subunit facing the microtubule plus end conferring a structural polarity. Microtubules usually have 13 protofilaments but different protofilament numbers can be found in some organisms and specialized cells. In terms of processing, acetylation of alpha chains at Lys-40 stabilizes microtubules and affects affinity and processivity of microtubule motors. This modification has a role in multiple cellular functions, ranging from cell motility, cell cycle progression or cell differentiation to intracellular trafficking and signaling.

It localises to the cytoplasm. It is found in the cytoskeleton. It catalyses the reaction GTP + H2O = GDP + phosphate + H(+). Functionally, tubulin is the major constituent of microtubules, a cylinder consisting of laterally associated linear protofilaments composed of alpha- and beta-tubulin heterodimers. Microtubules grow by the addition of GTP-tubulin dimers to the microtubule end, where a stabilizing cap forms. Below the cap, tubulin dimers are in GDP-bound state, owing to GTPase activity of alpha-tubulin. The chain is Tubulin alpha-2 chain from Stylonychia lemnae (Ciliate).